A 316-amino-acid polypeptide reads, in one-letter code: Pantothenate kinase (316 aa).

95–102 is an ATP binding site; it reads GSVAVGKS.

It belongs to the prokaryotic pantothenate kinase family.

Its subcellular location is the cytoplasm. It catalyses the reaction (R)-pantothenate + ATP = (R)-4'-phosphopantothenate + ADP + H(+). It participates in cofactor biosynthesis; coenzyme A biosynthesis; CoA from (R)-pantothenate: step 1/5. This is Pantothenate kinase from Shewanella baltica (strain OS195).